We begin with the raw amino-acid sequence, 585 residues long: Pheromone-processing carboxypeptidase KEX1 (585 aa).

Residues 1-18 form the signal peptide; the sequence is MCLLARVRHIEITPDVNG. At 19–469 the chain is on the lumenal side; that stretch reads NMFFWHFQNK…DTARWEAYRK (451 aa). Active-site residues include S135 and D335. N-linked (GlcNAc...) asparagine glycans are attached at residues N386 and N394. H397 is a catalytic residue. An N-linked (GlcNAc...) asparagine glycan is attached at N447. Residues 470 to 490 traverse the membrane as a helical segment; sequence SGEIVLVIVAFSAAGWGWWVW. Residues 491–585 lie on the Cytoplasmic side of the membrane; it reads RERKKRRGYM…KGKGKEKMSG (95 aa). Residues 526-585 form a disordered region; it reads AADLEAGDFDENELDDLHMRTPTTVMGGEGNDPRYSVGAASEDSEDEEDVKGKGKEKMSG. The segment covering 530–539 has biased composition (acidic residues); that stretch reads EAGDFDENEL. Residues 575 to 585 show a composition bias toward basic and acidic residues; it reads VKGKGKEKMSG.

It belongs to the peptidase S10 family.

It localises to the golgi apparatus. Its subcellular location is the trans-Golgi network membrane. It carries out the reaction Preferential release of a C-terminal arginine or lysine residue.. Protease with a carboxypeptidase B-like function involved in the C-terminal processing of the lysine and arginine residues from protein precursors. Promotes cell fusion and is involved in the programmed cell death. The polypeptide is Pheromone-processing carboxypeptidase KEX1 (KEX1) (Podospora anserina (strain S / ATCC MYA-4624 / DSM 980 / FGSC 10383) (Pleurage anserina)).